Reading from the N-terminus, the 185-residue chain is Large ribosomal subunit protein bL25 (185 aa).

It belongs to the bacterial ribosomal protein bL25 family. CTC subfamily. As to quaternary structure, part of the 50S ribosomal subunit; part of the 5S rRNA/L5/L18/L25 subcomplex. Contacts the 5S rRNA. Binds to the 5S rRNA independently of L5 and L18.

Its function is as follows. This is one of the proteins that binds to the 5S RNA in the ribosome where it forms part of the central protuberance. The sequence is that of Large ribosomal subunit protein bL25 from Chlamydia muridarum (strain MoPn / Nigg).